Here is a 486-residue protein sequence, read N- to C-terminus: Probable cytosol aminopeptidase (486 aa).

The protein belongs to the peptidase M17 family. Mn(2+) serves as cofactor.

The protein localises to the cytoplasm. The enzyme catalyses Release of an N-terminal amino acid, Xaa-|-Yaa-, in which Xaa is preferably Leu, but may be other amino acids including Pro although not Arg or Lys, and Yaa may be Pro. Amino acid amides and methyl esters are also readily hydrolyzed, but rates on arylamides are exceedingly low.. The catalysed reaction is Release of an N-terminal amino acid, preferentially leucine, but not glutamic or aspartic acids.. Its function is as follows. Presumably involved in the processing and regular turnover of intracellular proteins. Catalyzes the removal of unsubstituted N-terminal amino acids from various peptides. The polypeptide is Probable cytosol aminopeptidase (pepA) (Synechococcus elongatus (strain ATCC 33912 / PCC 7942 / FACHB-805) (Anacystis nidulans R2)).